A 204-amino-acid polypeptide reads, in one-letter code: MIGRLRGILLEKQPPELLIEVNGIGYEVQMPMSCFYELPNIGEEAIIYTHFVVREDAQLLYGFNTVKERALFREVIKANGVGPKLGLAILSGMTASQFVASVEREDISTLVKLPGVGKKTAERLVVEMKDRLKGWSAGDLFTPFTDAAPVDSGSTSSNSAEEEAVSALLALGYKPVQASKVVSQIAKPDMTSEQLIREALKSMV.

Residues 1-64 are domain I; sequence MIGRLRGILL…EDAQLLYGFN (64 aa). The interval 65-143 is domain II; the sequence is TVKERALFRE…GWSAGDLFTP (79 aa). Residues 144–155 are flexible linker; the sequence is FTDAAPVDSGST. The domain III stretch occupies residues 156 to 204; it reads SSNSAEEEAVSALLALGYKPVQASKVVSQIAKPDMTSEQLIREALKSMV.

This sequence belongs to the RuvA family. As to quaternary structure, homotetramer. Forms an RuvA(8)-RuvB(12)-Holliday junction (HJ) complex. HJ DNA is sandwiched between 2 RuvA tetramers; dsDNA enters through RuvA and exits via RuvB. An RuvB hexamer assembles on each DNA strand where it exits the tetramer. Each RuvB hexamer is contacted by two RuvA subunits (via domain III) on 2 adjacent RuvB subunits; this complex drives branch migration. In the full resolvosome a probable DNA-RuvA(4)-RuvB(12)-RuvC(2) complex forms which resolves the HJ.

It localises to the cytoplasm. Functionally, the RuvA-RuvB-RuvC complex processes Holliday junction (HJ) DNA during genetic recombination and DNA repair, while the RuvA-RuvB complex plays an important role in the rescue of blocked DNA replication forks via replication fork reversal (RFR). RuvA specifically binds to HJ cruciform DNA, conferring on it an open structure. The RuvB hexamer acts as an ATP-dependent pump, pulling dsDNA into and through the RuvAB complex. HJ branch migration allows RuvC to scan DNA until it finds its consensus sequence, where it cleaves and resolves the cruciform DNA. The sequence is that of Holliday junction branch migration complex subunit RuvA from Vibrio vulnificus (strain CMCP6).